The chain runs to 140 residues: Putative pre-16S rRNA nuclease (140 aa).

It belongs to the YqgF nuclease family.

The protein localises to the cytoplasm. Functionally, could be a nuclease involved in processing of the 5'-end of pre-16S rRNA. This Yersinia enterocolitica serotype O:8 / biotype 1B (strain NCTC 13174 / 8081) protein is Putative pre-16S rRNA nuclease.